Reading from the N-terminus, the 407-residue chain is E3 ubiquitin-protein ligase TRIM13 (407 aa).

The RING-type zinc finger occupies 10–58 (CPICCSLFDDPRVLPCSHNFCKKCLEGILEGNVRNSLWRSSPFKCPTCR). The B box-type zinc-finger motif lies at 89–131 (PKMPVCKGHLGQPLNIFCLTDMQLICGICATRGEHTKHVFCSI). 4 residues coordinate Zn(2+): cysteine 94, histidine 97, cysteine 117, and histidine 123. Residues 172–200 (LQLLTKDSDKVKEFFEKLQYTLDQKKNEI) are a coiled coil. The helical transmembrane segment at 316-336 (PLFVVVILLGLLIFFSPTMFL) threads the bilayer.

In terms of assembly, interacts (via C-terminal domain) with VCP. Interacts with AKT1; the interaction ubiquitinates AKT1 and leads to its proteasomal degradation. Interacts with MDM2; the interaction ubiquitinates AKT1 and leads to its proteasomal degradation. Interacts with p62/SQSTM1. Interacts with TRAF6. Interacts with IKBKG/NEMO. Auto-ubiquitinated; requires the RING-type zinc finger. Auto-polyubiquitination leads to proteasomal degradation.

Its subcellular location is the endoplasmic reticulum membrane. The enzyme catalyses S-ubiquitinyl-[E2 ubiquitin-conjugating enzyme]-L-cysteine + [acceptor protein]-L-lysine = [E2 ubiquitin-conjugating enzyme]-L-cysteine + N(6)-ubiquitinyl-[acceptor protein]-L-lysine.. Its pathway is protein modification; protein ubiquitination. Its function is as follows. Endoplasmic reticulum (ER) membrane anchored E3 ligase involved in the retrotranslocation and turnover of membrane and secretory proteins from the ER through a set of processes named ER-associated degradation (ERAD). This process acts on misfolded proteins as well as in the regulated degradation of correctly folded proteins. Enhances ionizing radiation-induced p53/TP53 stability and apoptosis via ubiquitinating MDM2 and AKT1 and decreasing AKT1 kinase activity through MDM2 and AKT1 proteasomal degradation. Regulates ER stress-induced autophagy, and may act as a tumor suppressor. Also plays a role in innate immune response by stimulating NF-kappa-B activity in the TLR2 signaling pathway. Ubiquitinates TRAF6 via the 'Lys-29'-linked polyubiquitination chain resulting in NF-kappa-B activation. Participates as well in T-cell receptor-mediated NF-kappa-B activation. In the presence of TNF, modulates the IKK complex by regulating IKBKG/NEMO ubiquitination leading to the repression of NF-kappa-B. This chain is E3 ubiquitin-protein ligase TRIM13 (TRIM13), found in Bos taurus (Bovine).